Reading from the N-terminus, the 154-residue chain is 6,7-dimethyl-8-ribityllumazine synthase (154 aa).

5-amino-6-(D-ribitylamino)uracil is bound by residues W22, 56 to 58, and 80 to 82; these read AWE and CVI. 85–86 contributes to the (2S)-2-hydroxy-3-oxobutyl phosphate binding site; sequence DT. H88 functions as the Proton donor in the catalytic mechanism. N113 lines the 5-amino-6-(D-ribitylamino)uracil pocket. (2S)-2-hydroxy-3-oxobutyl phosphate is bound at residue R127.

It belongs to the DMRL synthase family. Forms an icosahedral capsid composed of 60 subunits, arranged as a dodecamer of pentamers.

It carries out the reaction (2S)-2-hydroxy-3-oxobutyl phosphate + 5-amino-6-(D-ribitylamino)uracil = 6,7-dimethyl-8-(1-D-ribityl)lumazine + phosphate + 2 H2O + H(+). The protein operates within cofactor biosynthesis; riboflavin biosynthesis; riboflavin from 2-hydroxy-3-oxobutyl phosphate and 5-amino-6-(D-ribitylamino)uracil: step 1/2. In terms of biological role, catalyzes the formation of 6,7-dimethyl-8-ribityllumazine by condensation of 5-amino-6-(D-ribitylamino)uracil with 3,4-dihydroxy-2-butanone 4-phosphate. This is the penultimate step in the biosynthesis of riboflavin. In Xanthomonas campestris pv. campestris (strain 8004), this protein is 6,7-dimethyl-8-ribityllumazine synthase.